The following is a 556-amino-acid chain: Arginine--tRNA ligase (556 aa).

The 'HIGH' region motif lies at 132–142 (ANPTGDLHLGH).

Belongs to the class-I aminoacyl-tRNA synthetase family. Monomer.

The protein localises to the cytoplasm. It catalyses the reaction tRNA(Arg) + L-arginine + ATP = L-arginyl-tRNA(Arg) + AMP + diphosphate. The sequence is that of Arginine--tRNA ligase from Bacillus cereus (strain ATCC 14579 / DSM 31 / CCUG 7414 / JCM 2152 / NBRC 15305 / NCIMB 9373 / NCTC 2599 / NRRL B-3711).